The sequence spans 456 residues: Frizzled/smoothened-like sans CRD protein F (456 aa).

An N-terminal signal peptide occupies residues 1–30 (MIFNNLKNQNKIINFLIIFYFLSFLKQIES). The Extracellular portion of the chain corresponds to 31-92 (QSINITSSSS…PFFTINEWNK (62 aa)). Asparagine 34, asparagine 52, and asparagine 70 each carry an N-linked (GlcNAc...) asparagine glycan. The helical transmembrane segment at 93–113 (FLNMSLVMGTISFFSGLFLLV) threads the bilayer. Residues 114–127 (TYSPIVNKTHNRHT) lie on the Cytoplasmic side of the membrane. Residues 128–148 (IGVMCMSFGVCLAMCSDMWNF) traverse the membrane as a helical segment. Residues 149–174 (GSNFTEKSICPSPGQYLSTSNARCLS) lie on the Extracellular side of the membrane. N-linked (GlcNAc...) asparagine glycosylation is present at asparagine 151. Residues 175–195 (SGIFLQFGGVFGFLNWTLLSF) traverse the membrane as a helical segment. Over 196 to 211 (DLFMNIKGIITKNYDK) the chain is Cytoplasmic. Residues 212 to 232 (YYVSGTFIIAIIFTFVPIVND) form a helical membrane-spanning segment. At 233–252 (QYSMSYIGLGCWLGSAMYQL) the chain is on the extracellular side. Residues 253-273 (IFFWILLSICLIVSSVFIILI) traverse the membrane as a helical segment. Residues 274–297 (LKEVYIIIKLSKQKTSLKGNIRPL) lie on the Cytoplasmic side of the membrane. A helical transmembrane segment spans residues 298–318 (ICISITGFAFFYMFFYYISIV). Residues 319 to 354 (VEGDYYERVLNEYTDCLMDPTKDISECKSPRMSVAS) are Extracellular-facing. A helical transmembrane segment spans residues 355-375 (EFVFLLCLRLLGIGAFIFYGI). At 376–456 (NNKVKKIWLN…ESSLNSVDEI (81 aa)) the chain is on the cytoplasmic side. Residues 403-422 (ADNDKSNSNGSKVLYRTNNT) form a disordered region.

The protein belongs to the G-protein coupled receptor Fz/Smo family.

It is found in the membrane. The chain is Frizzled/smoothened-like sans CRD protein F (fscF) from Dictyostelium discoideum (Social amoeba).